A 371-amino-acid chain; its full sequence is MLKFQGSTHFRQRIICSTLSGKAIRITNIRDEDEKPGLRDYEASFLRLVDKITNGSKIEINSTGTQITYIPGIIIGGKGITHECGTVRGIGYFVEALICLGPFAKAPLDITLNGITNNDIDLTIDTIRTTTLPIIRKFGIEEGLIIKIIKRGAPPNGGGSVNFKCPIVPHLKAIQLIDEGKIRRIRGIAYATRISPQFSNRVLDKAKGLLLEYTPDVYISSDHYKGNESGLSPGYGLTLVAETTTGCCLSAECMSNTGIATTEQQLQKQKSTSETPEDLGERTAFALLEEIFNGGCIDSHNQSLALLFMVLCPEDISKVRLGKITPYTIEFIRQLRDFFGVTFKIEPDQNSKTVLFTCLGIGYKNMARSTF.

It belongs to the RNA 3'-terminal cyclase family. Type 2 subfamily. As to quaternary structure, part of the small subunit (SSU) processome, composed of more than 70 proteins and the RNA chaperone small nucleolar RNA (snoRNA) U3.

Its subcellular location is the nucleus. It localises to the nucleolus. Functionally, part of the small subunit (SSU) processome, first precursor of the small eukaryotic ribosomal subunit. During the assembly of the SSU processome in the nucleolus, many ribosome biogenesis factors, an RNA chaperone and ribosomal proteins associate with the nascent pre-rRNA and work in concert to generate RNA folding, modifications, rearrangements and cleavage as well as targeted degradation of pre-ribosomal RNA by the RNA exosome. Does not have cyclase activity. This chain is Probable RNA 3'-terminal phosphate cyclase-like protein (rcl1), found in Dictyostelium discoideum (Social amoeba).